We begin with the raw amino-acid sequence, 366 residues long: Class I histocompatibility antigen, Gogo-C*0203 alpha chain (366 aa).

The first 24 residues, 1 to 24 (MRVMAPRTLILLLSGALALTETWA), serve as a signal peptide directing secretion. Positions 25 to 114 (GSHSMRYFYT…LRGYYNQSED (90 aa)) are alpha-1. At 25–308 (GSHSMRYFYT…EPSSQPTIPI (284 aa)) the chain is on the extracellular side. Asparagine 110 carries an N-linked (GlcNAc...) asparagine glycan. Residues 115 to 206 (GSHTLQSMYG…ENGKETLQRA (92 aa)) are alpha-2. Cystine bridges form between cysteine 125-cysteine 188 and cysteine 227-cysteine 283. Residues 207–298 (EPPKTHVTHH…GLPEPLTLRW (92 aa)) form an alpha-3 region. The region spanning 209 to 297 (PKTHVTHHPL…EGLPEPLTLR (89 aa)) is the Ig-like C1-type domain. The tract at residues 299 to 308 (EPSSQPTIPI) is connecting peptide. A helical membrane pass occupies residues 309-332 (VGIVVGLAVLVVLAVLGAVVTAMM). Residues 333 to 366 (CRRKSSGGKGGSCSQAACSNSAQGSDESLITCKA) are Cytoplasmic-facing.

It belongs to the MHC class I family. Heterodimer of an alpha chain and a beta chain (beta-2-microglobulin).

It localises to the membrane. Functionally, involved in the presentation of foreign antigens to the immune system. In Gorilla gorilla gorilla (Western lowland gorilla), this protein is Class I histocompatibility antigen, Gogo-C*0203 alpha chain.